The sequence spans 256 residues: MLIIPAIDIKDGKCVRLTRGDFSQQKIYLDNPLDMAIIWRKQNAKMLHIVDLDAALTGEMVNFDIIANIVAELDIPVQIGGGIRSIDAVKRYLDMGVGRVVIGSAAVTDPELVGELMKHWPASKIVVGIDAENGVPKIKGWTESSGMQDYELALRMKDMGVERIVYTDISRDGMMQGFGYESTKRFAQKAGLKVTASGGVTNSEDLQRLATLRPYGVDSVIIGKAFYECNFPCQELWYNFEKGICLDQNFSTARRK.

Asp-8 acts as the Proton acceptor in catalysis. The Proton donor role is filled by Asp-130.

Belongs to the HisA/HisF family.

It is found in the cytoplasm. It carries out the reaction 1-(5-phospho-beta-D-ribosyl)-5-[(5-phospho-beta-D-ribosylamino)methylideneamino]imidazole-4-carboxamide = 5-[(5-phospho-1-deoxy-D-ribulos-1-ylimino)methylamino]-1-(5-phospho-beta-D-ribosyl)imidazole-4-carboxamide. It participates in amino-acid biosynthesis; L-histidine biosynthesis; L-histidine from 5-phospho-alpha-D-ribose 1-diphosphate: step 4/9. This Chlorobium phaeovibrioides (strain DSM 265 / 1930) (Prosthecochloris vibrioformis (strain DSM 265)) protein is 1-(5-phosphoribosyl)-5-[(5-phosphoribosylamino)methylideneamino] imidazole-4-carboxamide isomerase.